A 116-amino-acid polypeptide reads, in one-letter code: Large ribosomal subunit protein bL20c (116 aa).

Belongs to the bacterial ribosomal protein bL20 family.

The protein localises to the plastid. It localises to the chloroplast. Functionally, binds directly to 23S ribosomal RNA and is necessary for the in vitro assembly process of the 50S ribosomal subunit. It is not involved in the protein synthesizing functions of that subunit. This Oltmannsiellopsis viridis (Marine flagellate) protein is Large ribosomal subunit protein bL20c.